Here is a 429-residue protein sequence, read N- to C-terminus: Glutamate-1-semialdehyde 2,1-aminomutase 2 (429 aa).

Lysine 268 carries the post-translational modification N6-(pyridoxal phosphate)lysine.

This sequence belongs to the class-III pyridoxal-phosphate-dependent aminotransferase family. HemL subfamily. As to quaternary structure, homodimer. The cofactor is pyridoxal 5'-phosphate.

The protein localises to the cytoplasm. The enzyme catalyses (S)-4-amino-5-oxopentanoate = 5-aminolevulinate. The protein operates within porphyrin-containing compound metabolism; protoporphyrin-IX biosynthesis; 5-aminolevulinate from L-glutamyl-tRNA(Glu): step 2/2. The polypeptide is Glutamate-1-semialdehyde 2,1-aminomutase 2 (Bacillus thuringiensis (strain Al Hakam)).